Here is a 320-residue protein sequence, read N- to C-terminus: Cytochrome f (320 aa).

Residues 1-35 form the signal peptide; the sequence is MQTRNAFSWLKKQITRSISVSLMIYILTRTSISSA. 4 residues coordinate heme: Y36, C56, C59, and H60. The chain crosses the membrane as a helical span at residues 286 to 306; it reads VQGLLFFLASVILAQIFLVLK.

Belongs to the cytochrome f family. In terms of assembly, the 4 large subunits of the cytochrome b6-f complex are cytochrome b6, subunit IV (17 kDa polypeptide, petD), cytochrome f and the Rieske protein, while the 4 small subunits are PetG, PetL, PetM and PetN. The complex functions as a dimer. Heme is required as a cofactor.

Its subcellular location is the plastid. It is found in the chloroplast thylakoid membrane. Its function is as follows. Component of the cytochrome b6-f complex, which mediates electron transfer between photosystem II (PSII) and photosystem I (PSI), cyclic electron flow around PSI, and state transitions. This Nicotiana sylvestris (Wood tobacco) protein is Cytochrome f.